The primary structure comprises 1829 residues: Iron-regulated protein FrpC (1829 aa).

Hemolysin-type calcium-binding repeat units lie at residues 869–886 (FGHN…NDTL), 887–904 (IGGA…SDTY), 1015–1032 (NGGL…DDLL), 1033–1050 (NGDA…NDTL), 1051–1068 (NGGE…NDAL), 1069–1086 (NGGE…NDTL), 1087–1104 (IGGA…SDTY), 1215–1232 (NGGL…DDLL), 1233–1250 (NGDA…NDTL), 1251–1268 (DGGE…NDAL), 1269–1286 (NGGE…NDTL), 1287–1304 (IGGA…SDTY), 1415–1432 (NGGL…DDLL), 1433–1450 (NGDA…NDTL), 1451–1468 (DGGE…NDAL), 1469–1486 (NGGE…NDTL), 1487–1504 (IGGA…SDTY), 1615–1632 (NGGL…DDLL), 1633–1650 (NGDA…NDTL), 1651–1668 (NGGE…NDVL), 1669–1686 (NGGE…NDTL), and 1687–1704 (IGGA…SDTY).

It belongs to the RTX prokaryotic toxin (TC 1.C.11) family.

The protein resides in the cell outer membrane. Its subcellular location is the secreted. Its function is as follows. May participate in the pathogenesis of meningococcal disease. The sequence is that of Iron-regulated protein FrpC (frpC) from Neisseria meningitidis serogroup C.